A 154-amino-acid chain; its full sequence is MKDVVGSPGTWSGMSLRVSQCVFAGASVVAMASAYGFSNYTAFCYLIASMGLQLLWSFGLACLDIYSLQTKRDLHNPVLVSLFVVGDWVTAILSFAAASASAGVTILFERDVHFCRMYPQLSCGRYELSVILAFITWSFIATSAVSMFWLLASL.

At 1 to 17 (MKDVVGSPGTWSGMSLR) the chain is on the cytoplasmic side. Residues 18–38 (VSQCVFAGASVVAMASAYGFS) traverse the membrane as a helical segment. Asn39 carries N-linked (GlcNAc...) asparagine glycosylation. The Extracellular portion of the chain corresponds to 39–42 (NYTA). Residues 43 to 63 (FCYLIASMGLQLLWSFGLACL) form a helical membrane-spanning segment. The Cytoplasmic segment spans residues 64–77 (DIYSLQTKRDLHNP). Residues 78–98 (VLVSLFVVGDWVTAILSFAAA) form a helical membrane-spanning segment. Topologically, residues 99-129 (SASAGVTILFERDVHFCRMYPQLSCGRYELS) are extracellular. The helical transmembrane segment at 130–150 (VILAFITWSFIATSAVSMFWL) threads the bilayer. Residues 151 to 154 (LASL) are Cytoplasmic-facing.

It belongs to the Casparian strip membrane proteins (CASP) family. In terms of assembly, homodimer and heterodimers.

Its subcellular location is the cell membrane. In Oryza sativa subsp. indica (Rice), this protein is CASP-like protein 5B3.